A 356-amino-acid chain; its full sequence is Phosphate acyltransferase (356 aa).

It belongs to the PlsX family. In terms of assembly, homodimer. Probably interacts with PlsY.

Its subcellular location is the cytoplasm. It catalyses the reaction a fatty acyl-[ACP] + phosphate = an acyl phosphate + holo-[ACP]. It functions in the pathway lipid metabolism; phospholipid metabolism. Its function is as follows. Catalyzes the reversible formation of acyl-phosphate (acyl-PO(4)) from acyl-[acyl-carrier-protein] (acyl-ACP). This enzyme utilizes acyl-ACP as fatty acyl donor, but not acyl-CoA. In Shigella flexneri serotype 5b (strain 8401), this protein is Phosphate acyltransferase.